We begin with the raw amino-acid sequence, 330 residues long: MAILAFQKPDKVLMLEADSRFGKFEFRPLEPGFGITVGNALRRILLSSLEGFAINTIKIEGVEHEFASVPGVKEDVTNIILNLKQVRFKQVVEEFENEKVSITVENSSEFKAGDISKYLTGFEVLNPELVICHLDSKATMQMDITINKGRGYVPADENREYCTDVNVIPIDSIYTPIRNVKYQVENFRVEQKTDYEKLVLEITTDGSIHPKEALKEAAKILIYHFMLFSDEKITLETSDVDGNEEFDEEVLHMRQLLKTKLVDMDLSVRALNCLKAADVETLGDLVQFNKTDLLKFRNFGKKSLTELDDLLEGLNLSFGTDISKYKLDKE.

The segment at 1-231 (MAILAFQKPD…IYHFMLFSDE (231 aa)) is alpha N-terminal domain (alpha-NTD). The alpha C-terminal domain (alpha-CTD) stretch occupies residues 253 to 330 (MRQLLKTKLV…DISKYKLDKE (78 aa)).

The protein belongs to the RNA polymerase alpha chain family. Homodimer. The RNAP catalytic core consists of 2 alpha, 1 beta, 1 beta' and 1 omega subunit. When a sigma factor is associated with the core the holoenzyme is formed, which can initiate transcription.

It catalyses the reaction RNA(n) + a ribonucleoside 5'-triphosphate = RNA(n+1) + diphosphate. In terms of biological role, DNA-dependent RNA polymerase catalyzes the transcription of DNA into RNA using the four ribonucleoside triphosphates as substrates. The polypeptide is DNA-directed RNA polymerase subunit alpha (Phocaeicola vulgatus (strain ATCC 8482 / DSM 1447 / JCM 5826 / CCUG 4940 / NBRC 14291 / NCTC 11154) (Bacteroides vulgatus)).